A 261-amino-acid chain; its full sequence is uncharacterized protein (261 aa).

A compositionally biased stretch (polar residues) spans 1-12 (MSRTSSQNQEII). The interval 1–139 (MSRTSSQNQE…KELDTINKKT (139 aa)) is disordered. Over residues 23-55 (SSKPSKSSKPSKSSKPSKSSKTSKSSRSSGSKS) the composition is skewed to low complexity. Over residues 65 to 74 (SRKDKYKEEY) the composition is skewed to basic and acidic residues. Residues 79–108 (YPDEQEYEQEYEQEYEQEYQDNGEQTEEFV) show a composition bias toward acidic residues. Positions 122-139 (DERQTQSNKELDTINKKT) are enriched in basic and acidic residues. 2 coiled-coil regions span residues 151 to 181 (MDHDDNIKRLNAKMKAFKDAKKQEEESIIKL) and 218 to 243 (EDIIRDALMEVVRNERKVAELVKKIE).

This is an uncharacterized protein from Acanthamoeba polyphaga (Amoeba).